We begin with the raw amino-acid sequence, 300 residues long: Spermatogenesis-associated serine-rich protein 1 (300 aa).

The span at 1 to 10 (MSPSMLTGNS) shows a compositional bias: polar residues. 2 disordered regions span residues 1-42 (MSPS…MTEV) and 64-91 (TPSG…LPRV). Positions 27-42 (QLEKVPEKRDSGMTEV) are enriched in basic and acidic residues. The span at 64 to 85 (TPSGKSVSSSSSVETGPSVSEP) shows a compositional bias: low complexity. A Phosphoserine modification is found at serine 113.

The chain is Spermatogenesis-associated serine-rich protein 1 (SPATS1) from Homo sapiens (Human).